The sequence spans 120 residues: NAD(P)H-quinone oxidoreductase subunit 3, chloroplastic (120 aa).

The next 3 helical transmembrane spans lie at 9–29, 64–84, and 88–108; these read IFWAFLIISSAIPILAFLISG, MFALVFVVFDVETVFLYPWAM, and VLGVPVFIEAFIFVLILIVGS.

This sequence belongs to the complex I subunit 3 family. NDH is composed of at least 16 different subunits, 5 of which are encoded in the nucleus.

It localises to the plastid. The protein localises to the chloroplast thylakoid membrane. The enzyme catalyses a plastoquinone + NADH + (n+1) H(+)(in) = a plastoquinol + NAD(+) + n H(+)(out). It carries out the reaction a plastoquinone + NADPH + (n+1) H(+)(in) = a plastoquinol + NADP(+) + n H(+)(out). In terms of biological role, NDH shuttles electrons from NAD(P)H:plastoquinone, via FMN and iron-sulfur (Fe-S) centers, to quinones in the photosynthetic chain and possibly in a chloroplast respiratory chain. The immediate electron acceptor for the enzyme in this species is believed to be plastoquinone. Couples the redox reaction to proton translocation, and thus conserves the redox energy in a proton gradient. The protein is NAD(P)H-quinone oxidoreductase subunit 3, chloroplastic of Gossypium hirsutum (Upland cotton).